The chain runs to 444 residues: MARKYFGTDGIRGTVGQAPITPDFVLRLAHAVGRVLRRTEERPTVLIGKDTRISGYMLESALESGFNSAGVDVVLLGPLPTPGVAYLTRAQRASLGVVISASHNAYPDNGIKFFSAQGTKLPDEWELAVEAALDEAPAWADSASLGKARRLEDAAGRYIEFCKSTFSQDLTLKGTKIVVDAAHGAAYHIAPKVFHELGAEVLAIGCSPDGLNINHQVGATHPDALVRAVRANRADYGVALDGDADRLQMVDAAGRLYNGDELLYLLAADRLSRGENVPGVVGTLMTNMAVELALKADGVELVRAKVGDRYVLEELARRRWLLGGESSGHLLALDRHTTGDGLISALQVLQACVRGGRSLARTLEHVRLFPQVLVNVRLLPGQDWKANTVLQDALKSVEAELGTQGRVLVRASGTEPLLRVMVETSDADRASHFAHQLADAARAG.

The active-site Phosphoserine intermediate is Ser-102. Mg(2+) is bound by residues Ser-102, Asp-241, Asp-243, and Asp-245. A Phosphoserine modification is found at Ser-102.

This sequence belongs to the phosphohexose mutase family. It depends on Mg(2+) as a cofactor. In terms of processing, activated by phosphorylation.

The enzyme catalyses alpha-D-glucosamine 1-phosphate = D-glucosamine 6-phosphate. Catalyzes the conversion of glucosamine-6-phosphate to glucosamine-1-phosphate. The chain is Phosphoglucosamine mutase from Paracidovorax citrulli (strain AAC00-1) (Acidovorax citrulli).